Here is a 340-residue protein sequence, read N- to C-terminus: Extracellular matrix protein-binding protein emp (340 aa).

The first 26 residues, 1–26 (MKKKLLVLTMSTLFATQIMNSNHAKA), serve as a signal peptide directing secretion.

The protein resides in the cell surface. Functionally, adhesin that binds to the host cell extracellular matrix proteins fibronectin, fibrinogen, collagen, and vitronectin. The protein is Extracellular matrix protein-binding protein emp (emp) of Staphylococcus aureus (strain MSSA476).